The primary structure comprises 30 residues: Cyclotide vdif-A (30 aa).

Residues 1–30 (GIPCGESCVFIPCISSVVGCSCKSKVCYRN) constitute a cross-link (cyclopeptide (Gly-Asn)). 3 disulfides stabilise this stretch: Cys-4-Cys-20, Cys-8-Cys-22, and Cys-13-Cys-27.

Belongs to the cyclotide family. Bracelet subfamily. Post-translationally, this is a cyclic peptide.

Functionally, probably participates in a plant defense mechanism. In Viola diffusa, this protein is Cyclotide vdif-A.